The sequence spans 1190 residues: MSDSYYQGEYIKHPVLYELSHKYGFTENLPESCMSIRLEEIKEAIRREIRKELKIKEGAEKLREVAKDRRSLSDVAVLVKKSKSKLAELKSELQELESQILLTSANTAVNSNGQESITACIDPNGGFLVSGAVGGLGGGNTALEGGAPATANDKVLASLEKQLQIEMKVKTGAENMIQSLGIGCDKKLLAEAHQMLADSKAKIEFLRLRIIKVKQNREQADRLKASRQMIDEHGQTIGGNNSSQPQSLETTLEERIEELRHRLRIEAAVVDGAKNVIRTLQTANRAPDKKALQEAHGRLSESSRKLDLLRYSLDLRRQELPADSPAAQQLKTELQIVQLSTSPAPVTYTSLQSGQAGILGGKPYQSVSSLGRCASVTGKLEVRLLGCQDLLEDVPGRSRRDKDNNSSPGDLRSFVKGVTSRSSSKSYSVKDETSIEIMAVIKLDNITVGQTSWKQCSQQAWDQRFSIDLDRSRELEIGVYWRDWRSLCAVKVLRLEEFIDDVRHGMALQLEPQGLLFAEVKFLNPMISQKPKLRRQRMIFNRQQAKNISRAKQMNINVATWGRLLKRNAPNHVHMGSAGSGSSLTGSSPMVVGGSRDSESPISRTPSSDALVEPEPYTPGEQAQNLEFDPDAGINEHVETPGEYPDPAASGLSGMRPLSMHMQGISVLPPESPPVATGAAGRPNTLSLQMPGASKGQVIQGGRTAAPTTAPPPPPVLKATSTTPILDQEVIPQLGKLYVGSSQQQYAQQSSPIIQEPATPTIYGNSAAAGAPQFPQPAQRQEKQPPQQQPIYANQYELNVAKAAAAASVYSPSSSTTSNSNQQQQQQRRNVARGLQYRESGGLETGRAGKQPPNAGMLSMDNFRLLSVLGRGHFGKVILSQLRSNNQYYAIKALKKGDIIARDEVESLLSEKRIFEVANAMRHPFLVNLYSCFQTEQHVCFVMEYAAGGDLMMHIHTDVFLEPRAVFYAACVVLGLQYLHENKIIYRDLKLDNLLLDTEGYVKIADFGLCKEGMGFGDRTGTFCGTPEFLAPEVLTETSYTRAVDWWGLGVLIFEMLVGESPFPGDDEEEVFDSIVNDEVRYPRFLSLEAIAVMRRLLRKNPERRLGSSERDAEDVKKQAFFRSIVWDDLLLRKVKPPFVPTINHLEDVSNFDEEFTSEKAQLTPPKEPRHLTEEEQLLFQDFSYTAEWC.

REM-1 domains lie at 28 to 102 (NLPE…QILL), 142 to 219 (ALEG…NREQ), and 242 to 322 (SSQP…ELPA). Positions 359–515 (LGGKPYQSVS…MALQLEPQGL (157 aa)) constitute a C2 domain. The segment covering 395–404 (PGRSRRDKDN) has biased composition (basic and acidic residues). Disordered regions lie at residues 395–415 (PGRS…RSFV), 572–715 (HVHM…PPPP), 757–787 (PATP…QPPQ), and 811–832 (SPSS…RNVA). Composition is skewed to low complexity over residues 576-588 (GSAG…TGSS) and 767-787 (AAAG…QPPQ). Residues 863–1122 (FRLLSVLGRG…AEDVKKQAFF (260 aa)) enclose the Protein kinase domain. ATP-binding positions include 869-877 (LGRGHFGKV) and Lys-892. Residue Asp-988 is the Proton acceptor of the active site. The AGC-kinase C-terminal domain maps to 1123–1190 (RSIVWDDLLL…QDFSYTAEWC (68 aa)).

This sequence belongs to the protein kinase superfamily. Ser/Thr protein kinase family. Interacts (via N-terminus) with Rho1 (via REM repeats), Rac1 (via REM 1 repeat) and Rac2. In terms of processing, phosphorylated. Autophosphorylated; autophosphorylation is stimulated by GTP-bound Rho/Rac GTPases.

It localises to the cytoplasm. It is found in the nucleus. Its subcellular location is the membrane. The protein resides in the cell projection. The protein localises to the lamellipodium. It localises to the cytoskeleton. It is found in the cleavage furrow. Its subcellular location is the midbody. The protein resides in the cell junction. It carries out the reaction L-seryl-[protein] + ATP = O-phospho-L-seryl-[protein] + ADP + H(+). The catalysed reaction is L-threonyl-[protein] + ATP = O-phospho-L-threonyl-[protein] + ADP + H(+). Activated by lipids, particularly cardiolipin and to a lesser extent by other acidic phospholipids and unsaturated fatty acids. Two specific sites, Thr-1022 (activation loop of the kinase domain) and Thr-1164 (turn motif), may be needed to be phosphorylated for its full activation. Kinase activity is activated upon binding to GTP-bound Rho/Rac GTPases. Functionally, pkc-related serine/threonine-protein kinase and Rho/Rac effector protein that participates in specific signal transduction responses in the cell. May play a role in the regulation of cell cycle progression, actin cytoskeleton assembly, cell migration, cell adhesion and transcription activation signaling processes. Plays a role in regulating Rho-mediated dorsal closure during embryogenesis. The sequence is that of Serine/threonine-protein kinase N (Pkn) from Drosophila melanogaster (Fruit fly).